Reading from the N-terminus, the 249-residue chain is 2,3-bisphosphoglycerate-dependent phosphoglycerate mutase (249 aa).

Residues 9–16, 22–23, Arg-61, 88–91, Lys-99, 115–116, and 184–185 each bind substrate; these read RHGQSQWN, TG, ERHY, RR, and GN. The active-site Tele-phosphohistidine intermediate is His-10. Glu-88 acts as the Proton donor/acceptor in catalysis.

Belongs to the phosphoglycerate mutase family. BPG-dependent PGAM subfamily. As to quaternary structure, homodimer.

The catalysed reaction is (2R)-2-phosphoglycerate = (2R)-3-phosphoglycerate. It functions in the pathway carbohydrate degradation; glycolysis; pyruvate from D-glyceraldehyde 3-phosphate: step 3/5. Functionally, catalyzes the interconversion of 2-phosphoglycerate and 3-phosphoglycerate. The sequence is that of 2,3-bisphosphoglycerate-dependent phosphoglycerate mutase from Xanthomonas euvesicatoria pv. vesicatoria (strain 85-10) (Xanthomonas campestris pv. vesicatoria).